The following is a 330-amino-acid chain: Ketol-acid reductoisomerase (NADP(+)) (330 aa).

The KARI N-terminal Rossmann domain occupies 1–181 (MNAYYEQDAD…GGTKAGVIET (181 aa)). Residues 24–27 (FGSQ), Arg-47, Ser-50, Ser-52, and 82–85 (DQYQ) each bind NADP(+). Residue His-107 is part of the active site. Position 133 (Gly-133) interacts with NADP(+). The KARI C-terminal knotted domain maps to 182–327 (TFKNETETDL…AKLRDMMSWL (146 aa)). The Mg(2+) site is built by Asp-190, Glu-194, Glu-226, and Glu-230. Ser-251 contacts substrate.

Belongs to the ketol-acid reductoisomerase family. The cofactor is Mg(2+).

It catalyses the reaction (2R)-2,3-dihydroxy-3-methylbutanoate + NADP(+) = (2S)-2-acetolactate + NADPH + H(+). It carries out the reaction (2R,3R)-2,3-dihydroxy-3-methylpentanoate + NADP(+) = (S)-2-ethyl-2-hydroxy-3-oxobutanoate + NADPH + H(+). It functions in the pathway amino-acid biosynthesis; L-isoleucine biosynthesis; L-isoleucine from 2-oxobutanoate: step 2/4. Its pathway is amino-acid biosynthesis; L-valine biosynthesis; L-valine from pyruvate: step 2/4. Involved in the biosynthesis of branched-chain amino acids (BCAA). Catalyzes an alkyl-migration followed by a ketol-acid reduction of (S)-2-acetolactate (S2AL) to yield (R)-2,3-dihydroxy-isovalerate. In the isomerase reaction, S2AL is rearranged via a Mg-dependent methyl migration to produce 3-hydroxy-3-methyl-2-ketobutyrate (HMKB). In the reductase reaction, this 2-ketoacid undergoes a metal-dependent reduction by NADPH to yield (R)-2,3-dihydroxy-isovalerate. This Chlorobium phaeobacteroides (strain BS1) protein is Ketol-acid reductoisomerase (NADP(+)).